A 132-amino-acid polypeptide reads, in one-letter code: Translation initiation factor 5A (132 aa).

Position 36 is a hypusine (K36).

Belongs to the eIF-5A family.

It is found in the cytoplasm. Functions by promoting the formation of the first peptide bond. The protein is Translation initiation factor 5A (eIF5A) of Caldivirga maquilingensis (strain ATCC 700844 / DSM 13496 / JCM 10307 / IC-167).